The sequence spans 489 residues: Beta-glucosidase 14 (489 aa).

A signal peptide spans 1-21 (MTSKYFSVLVFIILASNEVVA). Position 49 (Gln-49) interacts with a beta-D-glucoside. Asn-80 carries an N-linked (GlcNAc...) asparagine glycan. A beta-D-glucoside contacts are provided by residues His-153 and 198 to 199 (NE). The Proton donor role is filled by Glu-199. A disulfide bridge links Cys-218 with Cys-226. A glycan (N-linked (GlcNAc...) asparagine) is linked at Asn-225. Tyr-343 lines the a beta-D-glucoside pocket. Asn-357 carries N-linked (GlcNAc...) asparagine glycosylation. Residues Glu-396, Trp-441, 448–449 (EW), and Phe-457 contribute to the a beta-D-glucoside site. Residue Glu-396 is the Nucleophile of the active site.

Belongs to the glycosyl hydrolase 1 family.

It catalyses the reaction Hydrolysis of terminal, non-reducing beta-D-glucosyl residues with release of beta-D-glucose.. This chain is Beta-glucosidase 14, found in Arabidopsis thaliana (Mouse-ear cress).